The sequence spans 365 residues: Aminotransferase poxL (365 aa).

R92 lines the pyridoxal 5'-phosphate pocket. The residue at position 193 (K193) is an N6-(pyridoxal phosphate)lysine. E229 contributes to the pyridoxal 5'-phosphate binding site.

Belongs to the class-IV pyridoxal-phosphate-dependent aminotransferase family. The cofactor is pyridoxal 5'-phosphate.

Its pathway is secondary metabolite biosynthesis. Aminotransferase; part of the gene cluster that mediates the biosynthesis of oxaleimides, cytotoxic compounds containing an unusual disubstituted succinimide moiety. The first step of the pathway is provided by the HR-PKS poxF that serves in a new mode of collaborative biosynthesis with the PKS-NRPS poxE, by providing the olefin containing amino acid substrate via the synthesis of an ACP-bound dec-4-enoate. The cytochrome P450 monooxygenase poxM-catalyzed oxidation at the alpha-position creates the enzyme-bound 2-hydroxydec-4-enoyl-ACP thioester, which may be prone to spontaneous hydrolysis to yield 2-hydroxydec-4-enoic acid due to increased electrophilicity of the carbonyl. 2-hydroxydec-4-enoic acid can then be further oxidized by poxM to yield the alpha-ketoacid 2-oxodec-4-enoicacid, which is reductively aminated by the aminotransferase poxL to yield (S,E)-2-aminodec-4-enoic acid. The Hybrid PKS-NRPS synthetase poxE then performs condensation between the octaketide product of its PKS modules and the amino group of (S,E)-2-aminodec-4-enoic acid which is activated and incorporated by the adenylation domain. The resulting aminoacyl product can be cyclized by the Diels-Alderase PoxQ and reductively released by the reductive (R) domain of poxE to yield an aldehyde intermediate. The released aldehyde is then substrate for a Knoevenagel condensation by the hydrolyase poxO followed by an oxidation at the 5-position of the pyrrolidone ring. The presence of the olefin from the amino acid building block allows for migration of the substituted allyl group to occur. This allylic transposition reaction takes place in a conjugate addition, semipinacol-like fashion to yield a succinimide intermediate. Iterative two-electron oxidations of the C7 methyl of the succinimide intermediate to the carboxylic acid can be catalyzed by one of two remaining cytochrome P450 monooxygenasess poxC or poxD to yield oxaleimide A. Subsequent oxidation yields the maleimide scaffold oxaleimide I. Both oxaleimide A and oxaleimide I can undergo oxidative modifications in the decalin ring to yield the series of products oxaleimides B to H. This chain is Aminotransferase poxL, found in Penicillium oxalicum (strain 114-2 / CGMCC 5302) (Penicillium decumbens).